Consider the following 868-residue polypeptide: Hopanoid transporter HpnN (868 aa).

A run of 12 helical transmembrane segments spans residues 16–36 (FAAF…FYTY), 273–293 (GAVV…WMAL), 298–318 (IIFA…AVGL), 326–346 (LLSI…GIQF), 370–390 (YSAV…LSFL), 403–423 (IAGA…PALL), 452–472 (IAII…LYFM), 710–730 (IVAS…ILLW), 740–760 (ALTL…CVLI), 762–782 (LPLN…GVAF), 805–825 (AIFF…LSSH), and 834–854 (LLAL…PALM). One can recognise an SSD domain in the interval 299-425 (IFAVAANLVI…ITVLPALLKL (127 aa)).

Belongs to the resistance-nodulation-cell division (RND) (TC 2.A.6) family. MmpL subfamily.

The protein resides in the cell inner membrane. In terms of biological role, essential for hopanoid transport from the cytoplasmic to the outer membrane. Required for the C(35) hopanoid, bacteriohopanetetrol, to remain localized to the mother cell type. This chain is Hopanoid transporter HpnN, found in Rhodopseudomonas palustris (strain TIE-1).